A 232-amino-acid chain; its full sequence is 6-phosphogluconolactonase (232 aa).

This sequence belongs to the glucosamine/galactosamine-6-phosphate isomerase family. 6-phosphogluconolactonase subfamily.

It catalyses the reaction 6-phospho-D-glucono-1,5-lactone + H2O = 6-phospho-D-gluconate + H(+). It functions in the pathway carbohydrate degradation; pentose phosphate pathway; D-ribulose 5-phosphate from D-glucose 6-phosphate (oxidative stage): step 2/3. In terms of biological role, hydrolysis of 6-phosphogluconolactone to 6-phosphogluconate. This Haemophilus influenzae (strain ATCC 51907 / DSM 11121 / KW20 / Rd) protein is 6-phosphogluconolactonase (pgl).